A 166-amino-acid polypeptide reads, in one-letter code: Small ribosomal subunit protein uS5 (166 aa).

Positions 12-75 (YIEKLVQVNR…EAARRNMIQV (64 aa)) constitute an S5 DRBM domain.

It belongs to the universal ribosomal protein uS5 family. Part of the 30S ribosomal subunit. Contacts proteins S4 and S8.

With S4 and S12 plays an important role in translational accuracy. In terms of biological role, located at the back of the 30S subunit body where it stabilizes the conformation of the head with respect to the body. The polypeptide is Small ribosomal subunit protein uS5 (Pseudomonas aeruginosa (strain LESB58)).